The chain runs to 259 residues: Ribonuclease HII (259 aa).

An RNase H type-2 domain is found at 69–257 (VAVCGVDEVG…VLEESQGLIY (189 aa)). 3 residues coordinate a divalent metal cation: aspartate 75, glutamate 76, and aspartate 167.

The protein belongs to the RNase HII family. Requires Mn(2+) as cofactor. Mg(2+) is required as a cofactor.

The protein resides in the cytoplasm. It catalyses the reaction Endonucleolytic cleavage to 5'-phosphomonoester.. In terms of biological role, endonuclease that specifically degrades the RNA of RNA-DNA hybrids. This chain is Ribonuclease HII, found in Shouchella clausii (strain KSM-K16) (Alkalihalobacillus clausii).